A 234-amino-acid polypeptide reads, in one-letter code: 7-carboxy-7-deazaguanine synthase (234 aa).

Substrate is bound by residues 36–38 (IQG) and arginine 51. One can recognise a Radical SAM core domain in the interval 42 to 234 (FVGYPSIFIR…LQTHKFLGIE (193 aa)). Residues cysteine 55, cysteine 59, and cysteine 62 each contribute to the [4Fe-4S] cluster site. Threonine 64 serves as a coordination point for Mg(2+). Substrate is bound at residue threonine 100. S-adenosyl-L-methionine is bound by residues glycine 102, 144–146 (SPK), and 195–198 (QSMD).

This sequence belongs to the radical SAM superfamily. 7-carboxy-7-deazaguanine synthase family. As to quaternary structure, homodimer. [4Fe-4S] cluster serves as cofactor. S-adenosyl-L-methionine is required as a cofactor. The cofactor is Mg(2+).

It catalyses the reaction 6-carboxy-5,6,7,8-tetrahydropterin + H(+) = 7-carboxy-7-deazaguanine + NH4(+). The protein operates within purine metabolism; 7-cyano-7-deazaguanine biosynthesis. Functionally, catalyzes the complex heterocyclic radical-mediated conversion of 6-carboxy-5,6,7,8-tetrahydropterin (CPH4) to 7-carboxy-7-deazaguanine (CDG), a step common to the biosynthetic pathways of all 7-deazapurine-containing compounds. This Rickettsia prowazekii (strain Madrid E) protein is 7-carboxy-7-deazaguanine synthase.